Here is a 123-residue protein sequence, read N- to C-terminus: Small ribosomal subunit protein uS12c (123 aa).

Over residues 1 to 20 (MPTIQQLIRNTRQPTQNRTK) the composition is skewed to polar residues. The interval 1–27 (MPTIQQLIRNTRQPTQNRTKSPALKAC) is disordered.

This sequence belongs to the universal ribosomal protein uS12 family. As to quaternary structure, part of the 30S ribosomal subunit.

It localises to the plastid. It is found in the chloroplast. In terms of biological role, with S4 and S5 plays an important role in translational accuracy. Located at the interface of the 30S and 50S subunits. The chain is Small ribosomal subunit protein uS12c (rps12) from Zygnema circumcarinatum (Green alga).